Here is a 199-residue protein sequence, read N- to C-terminus: Recombination protein RecR (199 aa).

A C4-type zinc finger spans residues cysteine 57–cysteine 72. The region spanning aspartate 81 to proline 176 is the Toprim domain.

It belongs to the RecR family.

In terms of biological role, may play a role in DNA repair. It seems to be involved in an RecBC-independent recombinational process of DNA repair. It may act with RecF and RecO. This Shewanella halifaxensis (strain HAW-EB4) protein is Recombination protein RecR.